The following is a 129-amino-acid chain: Small ribosomal subunit protein uS11c (129 aa).

This sequence belongs to the universal ribosomal protein uS11 family. As to quaternary structure, part of the 30S ribosomal subunit.

Its subcellular location is the plastid. The protein resides in the chloroplast. This chain is Small ribosomal subunit protein uS11c, found in Euglena gracilis.